The sequence spans 76 residues: UPF0291 protein MW2494 (76 aa).

Belongs to the UPF0291 family.

Its subcellular location is the cytoplasm. The protein is UPF0291 protein MW2494 of Staphylococcus aureus (strain MW2).